Consider the following 232-residue polypeptide: Sugar fermentation stimulation protein homolog (232 aa).

This sequence belongs to the SfsA family.

The polypeptide is Sugar fermentation stimulation protein homolog (Brucella anthropi (strain ATCC 49188 / DSM 6882 / CCUG 24695 / JCM 21032 / LMG 3331 / NBRC 15819 / NCTC 12168 / Alc 37) (Ochrobactrum anthropi)).